We begin with the raw amino-acid sequence, 393 residues long: NADH-quinone oxidoreductase subunit D (393 aa).

Belongs to the complex I 49 kDa subunit family. In terms of assembly, NDH-1 is composed of 14 different subunits. Subunits NuoB, C, D, E, F, and G constitute the peripheral sector of the complex.

The protein localises to the cell inner membrane. It catalyses the reaction a quinone + NADH + 5 H(+)(in) = a quinol + NAD(+) + 4 H(+)(out). In terms of biological role, NDH-1 shuttles electrons from NADH, via FMN and iron-sulfur (Fe-S) centers, to quinones in the respiratory chain. The immediate electron acceptor for the enzyme in this species is believed to be ubiquinone. Couples the redox reaction to proton translocation (for every two electrons transferred, four hydrogen ions are translocated across the cytoplasmic membrane), and thus conserves the redox energy in a proton gradient. The polypeptide is NADH-quinone oxidoreductase subunit D (Ehrlichia chaffeensis (strain ATCC CRL-10679 / Arkansas)).